The sequence spans 127 residues: Major sperm protein 78 (127 aa).

Ala-2 is subject to N-acetylalanine. Positions 9-126 (DIQTQPGTKI…RRKNLPIEYN (118 aa)) constitute an MSP domain.

In terms of tissue distribution, sperm.

The protein resides in the cell projection. Its subcellular location is the pseudopodium. It localises to the cytoplasm. The protein localises to the cytoskeleton. Functionally, central component in molecular interactions underlying sperm crawling. Forms an extensive filament system that extends from sperm villipoda, along the leading edge of the pseudopod. In Caenorhabditis elegans, this protein is Major sperm protein 78 (msp-78).